We begin with the raw amino-acid sequence, 1535 residues long: Lysine-specific demethylase 5D (1535 aa).

A JmjN domain is found at 14–55; sequence CPVFEPSWAEFQDPLGYIAKIRPIAEKSGICKIRPPADWQPP. An ARID domain is found at 79-169; sequence TRVKLNYLDQ…IIYPYEMFQS (91 aa). The segment at 192–227 is disordered; the sequence is PHSIPLRQSVQPSKFSSYSRRAKRLQPDPEPTEEDI. Polar residues predominate over residues 197–210; it reads LRQSVQPSKFSSYS. Residues K205, K229, K244, and K272 each participate in a glycyl lysine isopeptide (Lys-Gly) (interchain with G-Cter in SUMO2) cross-link. A phosphoserine mark is found at S291 and S307. The segment at 314-364 adopts a PHD-type 1 zinc-finger fold; it reads SYICQVCSRGDEDDKLLFCDGCDDNYHIFCLLPPLPEIPRGIWRCPKCILA. Y430 contributes to the 2-oxoglutarate binding site. In terms of domain architecture, JmjC spans 458 to 624; sequence EYATSGWNLN…AGRQCIEHYR (167 aa). 2 residues coordinate Fe cation: H504 and E506. 3 residues coordinate 2-oxoglutarate: S512, N514, and K522. Residue H592 coordinates Fe cation. The segment at 697–749 adopts a C5HC2 zinc-finger fold; sequence CIKCKTTCFLSALACYDCPDGLVCLSHINDLCKCSSSRQYLRYRYTLDELPTM. Phosphoserine is present on S884. The PHD-type 2 zinc finger occupies 1174 to 1235; sequence ICVCGQVPAG…DTKFLCPLCM (62 aa). S1342 is modified (phosphoserine). Positions 1425–1519 are disordered; the sequence is HQGSRTRSRA…KDSGSSAACP (95 aa). The segment covering 1428–1441 has biased composition (basic residues); the sequence is SRTRSRALERRRRQ. The span at 1473–1487 shows a compositional bias: basic and acidic residues; the sequence is GREEEHYQEKADREN. Residues 1490–1517 are compositionally biased toward polar residues; that stretch reads LTPSTDHSPSLKGNQNSLQHKDSGSSAA.

It belongs to the JARID1 histone demethylase family. Interacts withPCGF6, MSH5, ZMYND8, AR. Requires L-ascorbate as cofactor. Fe(2+) serves as cofactor.

The protein resides in the nucleus. The enzyme catalyses N(6),N(6),N(6)-trimethyl-L-lysyl(4)-[histone H3] + 3 2-oxoglutarate + 3 O2 = L-lysyl(4)-[histone H3] + 3 formaldehyde + 3 succinate + 3 CO2. Its function is as follows. Histone demethylase that specifically demethylates 'Lys-4' of histone H3, thereby playing a central role in histone code. Does not demethylate histone H3 'Lys-9', H3 'Lys-27', H3 'Lys-36', H3 'Lys-79' or H4 'Lys-20'. Demethylates trimethylated and dimethylated but not monomethylated H3 'Lys-4'. May play a role in spermatogenesis. Involved in transcriptional repression of diverse metastasis-associated genes; in this function seems to cooperate with ZMYND8. Suppresses prostate cancer cell invasion. Regulates androgen receptor (AR) transcriptional activity by demethylating H3K4me3 active transcription marks. This Pan troglodytes (Chimpanzee) protein is Lysine-specific demethylase 5D (KDM5D).